A 156-amino-acid chain; its full sequence is MPRKGPAPKRPLVQDPVYGSPLVTQLINKVLVDGKKSTAERIVYGALEGARAKSGGDPVAALKKAMDNVKPSLEVRSRRVGGATYQVPVEVKPGRSTALALRWLVGYSKARREKTMTERLQNEILDASNGLGAAVKRREDTHKMAESNKAFAHYRW.

Belongs to the universal ribosomal protein uS7 family. As to quaternary structure, part of the 30S ribosomal subunit. Contacts proteins S9 and S11.

Its function is as follows. One of the primary rRNA binding proteins, it binds directly to 16S rRNA where it nucleates assembly of the head domain of the 30S subunit. Is located at the subunit interface close to the decoding center, probably blocks exit of the E-site tRNA. The polypeptide is Small ribosomal subunit protein uS7 (Pseudarthrobacter chlorophenolicus (strain ATCC 700700 / DSM 12829 / CIP 107037 / JCM 12360 / KCTC 9906 / NCIMB 13794 / A6) (Arthrobacter chlorophenolicus)).